Reading from the N-terminus, the 409-residue chain is Glycosaminoglycan xylosylkinase (409 aa).

Residues 1–6 (MKLKQR) lie on the Cytoplasmic side of the membrane. Residues 7–25 (VVLLAILLVIFIFTKVFLI) form a helical; Signal-anchor for type II membrane protein membrane-spanning segment. Topologically, residues 26–409 (DNLDTSAANR…VEDRMPLSHL (384 aa)) are lumenal. Gln107 and Lys123 together coordinate ATP. Asp142 is a binding site for Mn(2+). N-linked (GlcNAc...) asparagine glycosylation occurs at Asn193. 2 disulfide bridges follow: Cys196-Cys211 and Cys201-Cys204. ATP is bound at residue 222-225 (TLWL). Intrachain disulfides connect Cys257-Cys331 and Cys332-Cys389. Asp289 is an active-site residue. The ATP site is built by Glu294 and Asp309. Asp309 serves as a coordination point for Mn(2+).

The protein belongs to the FAM20 family. The cofactor is Mn(2+). Widely expressed. Strongly expressed in pancreas, spleen and fetal liver.

The protein resides in the golgi apparatus membrane. The enzyme catalyses 3-O-(beta-D-galactosyl-(1-&gt;3)-beta-D-galactosyl-(1-&gt;4)-beta-D-xylosyl)-L-seryl-[protein] + ATP = 3-O-(beta-D-galactosyl-(1-&gt;3)-beta-D-galactosyl-(1-&gt;4)-beta-D-2-O-phosphoxylosyl)-L-seryl-[protein] + ADP + H(+). Functionally, responsible for the 2-O-phosphorylation of xylose in the glycosaminoglycan-protein linkage region of proteoglycans thereby regulating the amount of mature GAG chains. Sulfated glycosaminoglycans (GAGs), including heparan sulfate and chondroitin sulfate, are synthesized on the so-called common GAG-protein linkage region (GlcUAbeta1-3Galbeta1-3Galbeta1-4Xylbeta1-O-Ser) of core proteins, which is formed by the stepwise addition of monosaccharide residues by the respective specific glycosyltransferases. Xylose 2-O-phosphorylation may influence the catalytic activity of B3GAT3 (GlcAT-I) which completes the precursor tetrasaccharide of GAG-protein linkage regions on which the repeating disaccharide region is synthesized. The protein is Glycosaminoglycan xylosylkinase of Homo sapiens (Human).